We begin with the raw amino-acid sequence, 405 residues long: MENIMTLPKIKHVRAWFIGGATAEKGAGGGDYHDQGGNHWIDDHIATPMSKYRDYEQSRQSFGINVLGTLIVEVEAENRQTGFAVSTAGEMGCFIVEKHLNRFIEGKCVSDIKLIHDQMLGATMYYSGSGGLVMNTISCVDLALWDLFGKVVGLPVYKLLGGAVRDEIQFYATGARPDLAKEMGFIGGKMPTHWGPHDGDAGIRKDAAMVADMREKCGPDFWLMLDCWMSQDVNYATKLAHACAPFNLKWIEECLPPQQYEGYRELKRNAPAGMMVTSGEHHGTLQSFRTLAETGIDIMQPDVGWCGGLTTLVEIAALAKSRGQLVVPHGSSVYSHHAVITFTNTPFSEFLMTSPDCSTLRPQFDPILLDEPVPVNGRIHKSVLDKPGFGVELNRDCHLKRPYSH.

Substrate is bound by residues His33 and Arg59. The Mg(2+) site is built by Asp226, Glu252, and Glu280. The active-site Proton acceptor is the His329. Residue Glu349 participates in substrate binding.

Belongs to the mandelate racemase/muconate lactonizing enzyme family. RhamD subfamily. Homooctamer; tetramer of dimers. Requires Mg(2+) as cofactor.

It carries out the reaction L-rhamnonate = 2-dehydro-3-deoxy-L-rhamnonate + H2O. Its function is as follows. Catalyzes the dehydration of L-rhamnonate to 2-keto-3-deoxy-L-rhamnonate (KDR). Can also dehydrate L-lyxonate and L-mannonate, although less efficiently, but not 2-keto-4-hydroxyheptane-1,7-dioate. The chain is L-rhamnonate dehydratase (rhmD) from Salmonella typhimurium (strain LT2 / SGSC1412 / ATCC 700720).